The following is a 588-amino-acid chain: Aspartate--tRNA ligase (588 aa).

Glutamate 172 contacts L-aspartate. Positions 196-199 (QLFK) are aspartate. Residue arginine 218 participates in L-aspartate binding. ATP contacts are provided by residues 218 to 220 (RDE) and glutamine 227. An L-aspartate-binding site is contributed by histidine 449. Residue glutamate 483 participates in ATP binding. Arginine 490 serves as a coordination point for L-aspartate. Residue 535–538 (GLDR) coordinates ATP.

Belongs to the class-II aminoacyl-tRNA synthetase family. Type 1 subfamily. As to quaternary structure, homodimer.

It is found in the cytoplasm. It carries out the reaction tRNA(Asp) + L-aspartate + ATP = L-aspartyl-tRNA(Asp) + AMP + diphosphate. Its function is as follows. Catalyzes the attachment of L-aspartate to tRNA(Asp) in a two-step reaction: L-aspartate is first activated by ATP to form Asp-AMP and then transferred to the acceptor end of tRNA(Asp). The protein is Aspartate--tRNA ligase of Haemophilus influenzae (strain ATCC 51907 / DSM 11121 / KW20 / Rd).